Consider the following 131-residue polypeptide: Small ribosomal subunit protein uS8 (131 aa).

It belongs to the universal ribosomal protein uS8 family. In terms of assembly, part of the 30S ribosomal subunit. Contacts proteins S5 and S12.

One of the primary rRNA binding proteins, it binds directly to 16S rRNA central domain where it helps coordinate assembly of the platform of the 30S subunit. This chain is Small ribosomal subunit protein uS8, found in Malacoplasma penetrans (strain HF-2) (Mycoplasma penetrans).